Consider the following 309-residue polypeptide: Putative S-adenosyl-L-methionine-dependent methyltransferase Mflv_0743 (309 aa).

S-adenosyl-L-methionine-binding positions include aspartate 134 and 163–164; that span reads DL.

Belongs to the UPF0677 family.

Exhibits S-adenosyl-L-methionine-dependent methyltransferase activity. The protein is Putative S-adenosyl-L-methionine-dependent methyltransferase Mflv_0743 of Mycolicibacterium gilvum (strain PYR-GCK) (Mycobacterium gilvum (strain PYR-GCK)).